The sequence spans 274 residues: tRNA pseudouridine synthase A (274 aa).

The Nucleophile role is filled by Asp51. Tyr109 contacts substrate.

The protein belongs to the tRNA pseudouridine synthase TruA family. Homodimer.

The enzyme catalyses uridine(38/39/40) in tRNA = pseudouridine(38/39/40) in tRNA. In terms of biological role, formation of pseudouridine at positions 38, 39 and 40 in the anticodon stem and loop of transfer RNAs. The protein is tRNA pseudouridine synthase A of Acidovorax ebreus (strain TPSY) (Diaphorobacter sp. (strain TPSY)).